A 370-amino-acid polypeptide reads, in one-letter code: uncharacterized protein (370 aa).

Lys-207 carries the post-translational modification N6-(pyridoxal phosphate)lysine.

This sequence belongs to the class-V pyridoxal-phosphate-dependent aminotransferase family. Pyridoxal 5'-phosphate is required as a cofactor.

This is an uncharacterized protein from Bacillus subtilis (strain 168).